The following is a 411-amino-acid chain: D-galactonate dehydratase family member SBI_01856 (411 aa).

Substrate contacts are provided by Asn45 and His130. Tyr167 serves as the catalytic Proton donor/acceptor. Asp219 lines the Mg(2+) pocket. His221 functions as the Proton donor/acceptor in the catalytic mechanism. Glu245 and Glu271 together coordinate Mg(2+). Residues Glu271, Arg292, His321, Asp325, and Glu348 each coordinate substrate.

The protein belongs to the mandelate racemase/muconate lactonizing enzyme family. GalD subfamily. Requires Mg(2+) as cofactor.

The catalysed reaction is D-gluconate = 2-dehydro-3-deoxy-D-gluconate + H2O. In terms of biological role, has low D-gluconate dehydratase activity (in vitro), suggesting that it has no significant role in D-gluconate degradation in vivo. Has no detectable activity with a panel of 70 other acid sugars (in vitro). The protein is D-galactonate dehydratase family member SBI_01856 of Streptomyces bingchenggensis (strain BCW-1).